We begin with the raw amino-acid sequence, 152 residues long: UPF0225 protein YchJ (152 aa).

This sequence belongs to the UPF0225 family.

This Shigella boydii serotype 18 (strain CDC 3083-94 / BS512) protein is UPF0225 protein YchJ.